The chain runs to 423 residues: uncharacterized protein (423 aa).

This is an uncharacterized protein from Rhizobium meliloti (strain 1021) (Ensifer meliloti).